The chain runs to 481 residues: Cobyric acid synthase (481 aa).

Residues 249–436 enclose the GATase cobBQ-type domain; the sequence is GLHIVCLRLS…LHGMFRDDAF (188 aa). The active-site Nucleophile is Cys331. Residue His428 is part of the active site.

Belongs to the CobB/CobQ family. CobQ subfamily.

Its pathway is cofactor biosynthesis; adenosylcobalamin biosynthesis. In terms of biological role, catalyzes amidations at positions B, D, E, and G on adenosylcobyrinic A,C-diamide. NH(2) groups are provided by glutamine, and one molecule of ATP is hydrogenolyzed for each amidation. This chain is Cobyric acid synthase, found in Jannaschia sp. (strain CCS1).